Here is a 460-residue protein sequence, read N- to C-terminus: Inner membrane symporter YicJ (460 aa).

Over 1–11 the chain is Periplasmic; it reads MKSEVLSVKEK. 2 helical membrane passes run 12-32 and 33-53; these read IGYG…MLYM and MFFY…MFLV. Residues 54-80 are Periplasmic-facing; that stretch reads ARALDAISDPCMGLLADRTRSRWGKFR. Residues 81 to 101 form a helical membrane-spanning segment; the sequence is PWVLFGALPFGIVCVLAYSTP. Topologically, residues 102–116 are cytoplasmic; sequence DLSMNGKMIYAAITY. Residues 117–137 form a helical membrane-spanning segment; sequence TLLTLLYTVVNIPYCALGGVI. The Periplasmic segment spans residues 138–152; that stretch reads TNDPTQRISLQSWRF. Residues 153 to 173 traverse the membrane as a helical segment; the sequence is VLATAGGMLSTVLMMPLVNLI. The Cytoplasmic segment spans residues 174-181; that stretch reads GGDNKPLG. A helical membrane pass occupies residues 182–202; that stretch reads FQGGIAVLSVVAFMMLAFCFF. At 203-248 the chain is on the periplasmic side; that stretch reads TTKERVEAPPTTTSMREDLRDIWQNDQWRIVGLLTIFNILAVCVRG. The chain crosses the membrane as a helical span at residues 249 to 269; sequence GAMMYYVTWILGTPEVFVAFL. Residues 270–288 are Cytoplasmic-facing; sequence TTYCVGNLIGSALAKPLTD. Residues 289–309 form a helical membrane-spanning segment; that stretch reads WKCKVTIFWWTNALLAVISLA. A topological domain (periplasmic) is located at residue M310. The chain crosses the membrane as a helical span at residues 311–331; the sequence is FFVPMQASITMFVFIFVIGVL. Residues 332–366 lie on the Cytoplasmic side of the membrane; sequence HQLVTPIQWVMMSDTVDYGEWCNGKRLTGISFAGT. Residues 367–387 form a helical membrane-spanning segment; that stretch reads LFVLKLGLAFGGALIGWMLAY. Residues 388–403 are Periplasmic-facing; that stretch reads GGYDAAEKAQNSATIS. Residues 404-424 traverse the membrane as a helical segment; that stretch reads IIIALFTIVPAICYLLSAIIA. At 425–460 the chain is on the cytoplasmic side; it reads KRYYSLTTHNLKTVMEQLAQGKRRCQQQFTSQEVQN.

Belongs to the sodium:galactoside symporter (TC 2.A.2) family.

The protein localises to the cell inner membrane. In Escherichia coli (strain K12), this protein is Inner membrane symporter YicJ (yicJ).